A 157-amino-acid chain; its full sequence is SsrA-binding protein (157 aa).

This sequence belongs to the SmpB family.

It is found in the cytoplasm. Its function is as follows. Required for rescue of stalled ribosomes mediated by trans-translation. Binds to transfer-messenger RNA (tmRNA), required for stable association of tmRNA with ribosomes. tmRNA and SmpB together mimic tRNA shape, replacing the anticodon stem-loop with SmpB. tmRNA is encoded by the ssrA gene; the 2 termini fold to resemble tRNA(Ala) and it encodes a 'tag peptide', a short internal open reading frame. During trans-translation Ala-aminoacylated tmRNA acts like a tRNA, entering the A-site of stalled ribosomes, displacing the stalled mRNA. The ribosome then switches to translate the ORF on the tmRNA; the nascent peptide is terminated with the 'tag peptide' encoded by the tmRNA and targeted for degradation. The ribosome is freed to recommence translation, which seems to be the essential function of trans-translation. The polypeptide is SsrA-binding protein (Christiangramia forsetii (strain DSM 17595 / CGMCC 1.15422 / KT0803) (Gramella forsetii)).